Reading from the N-terminus, the 447-residue chain is Argininosuccinate synthase (447 aa).

ATP contacts are provided by residues 17–25 (AFSGGLDTS) and Ala43. Tyr99 provides a ligand contact to L-citrulline. ATP contacts are provided by Gly129 and Thr131. Residues Thr131, Asn135, and Asp136 each contribute to the L-aspartate site. Position 135 (Asn135) interacts with L-citrulline. ATP is bound at residue Asp136. L-citrulline is bound by residues Arg139 and Ser192. Asp194 is an ATP binding site. Thr201, Glu203, and Glu280 together coordinate L-citrulline.

This sequence belongs to the argininosuccinate synthase family. Type 2 subfamily. As to quaternary structure, homotetramer.

It is found in the cytoplasm. The enzyme catalyses L-citrulline + L-aspartate + ATP = 2-(N(omega)-L-arginino)succinate + AMP + diphosphate + H(+). It participates in amino-acid biosynthesis; L-arginine biosynthesis; L-arginine from L-ornithine and carbamoyl phosphate: step 2/3. The protein is Argininosuccinate synthase of Escherichia coli O9:H4 (strain HS).